Consider the following 262-residue polypeptide: (2Z,6E)-farnesyl diphosphate synthase (262 aa).

The active site involves aspartate 40. Aspartate 40 is a binding site for Mg(2+). Residues 41 to 44 (GNRR), tryptophan 45, and 86 to 88 (STE) contribute to the substrate site. The Proton acceptor role is filled by asparagine 89. Substrate is bound by residues arginine 92, arginine 211, and 217–219 (RLS). Residue glutamate 230 coordinates Mg(2+).

Belongs to the UPP synthase family. Z-FPP synthase subfamily. In terms of assembly, homodimer. Mg(2+) serves as cofactor.

Its subcellular location is the cytoplasm. It is found in the cell membrane. It carries out the reaction isopentenyl diphosphate + (2E)-geranyl diphosphate = (2Z,6E)-farnesyl diphosphate + diphosphate. Catalyzes the condensation of only one isopentenyl pyrophosphate (IPP) unit in the cis configuration to E-geranyl diphosphate (E-GPP) generating the 15 carbon product (2Z,6E)-farnesyl diphosphate (Z-FPP or EZ-FPP). Z-FPP is the precursor of decaprenyl diphosphate, which has a central role in the biosynthesis of the mycobacterial cell wall. This chain is (2Z,6E)-farnesyl diphosphate synthase, found in Mycobacterium tuberculosis (strain CDC 1551 / Oshkosh).